Here is a 205-residue protein sequence, read N- to C-terminus: Guanylate kinase (205 aa).

In terms of domain architecture, Guanylate kinase-like spans 6–184 (GLLLVVSGPS…SAKEIEGIIS (179 aa)). An ATP-binding site is contributed by 13 to 20 (GPSGAGKG).

This sequence belongs to the guanylate kinase family.

The protein localises to the cytoplasm. The catalysed reaction is GMP + ATP = GDP + ADP. Functionally, essential for recycling GMP and indirectly, cGMP. The protein is Guanylate kinase of Clostridioides difficile (strain 630) (Peptoclostridium difficile).